We begin with the raw amino-acid sequence, 262 residues long: Adenosylcobinamide-GDP ribazoletransferase (262 aa).

The next 6 helical transmembrane spans lie at 43–63 (YFGL…WLTQ), 66–86 (LPAG…TGGF), 120–140 (GALA…ELAL), 146–166 (AGSA…SLIF), 191–211 (LFIL…IAAL), and 242–262 (AAQQ…GSIL).

It belongs to the CobS family. Mg(2+) is required as a cofactor.

Its subcellular location is the cell inner membrane. The catalysed reaction is alpha-ribazole + adenosylcob(III)inamide-GDP = adenosylcob(III)alamin + GMP + H(+). It carries out the reaction alpha-ribazole 5'-phosphate + adenosylcob(III)inamide-GDP = adenosylcob(III)alamin 5'-phosphate + GMP + H(+). Its pathway is cofactor biosynthesis; adenosylcobalamin biosynthesis; adenosylcobalamin from cob(II)yrinate a,c-diamide: step 7/7. In terms of biological role, joins adenosylcobinamide-GDP and alpha-ribazole to generate adenosylcobalamin (Ado-cobalamin). Also synthesizes adenosylcobalamin 5'-phosphate from adenosylcobinamide-GDP and alpha-ribazole 5'-phosphate. This Shewanella sp. (strain ANA-3) protein is Adenosylcobinamide-GDP ribazoletransferase.